Here is a 396-residue protein sequence, read N- to C-terminus: Phosphoglycerate kinase (396 aa).

Substrate is bound by residues 21–23, R37, 60–63, R121, and R154; these read DFN and HLGR. ATP contacts are provided by residues K205, G296, E327, and 353-356; that span reads GGDS.

This sequence belongs to the phosphoglycerate kinase family. In terms of assembly, monomer.

It localises to the cytoplasm. The catalysed reaction is (2R)-3-phosphoglycerate + ATP = (2R)-3-phospho-glyceroyl phosphate + ADP. The protein operates within carbohydrate degradation; glycolysis; pyruvate from D-glyceraldehyde 3-phosphate: step 2/5. This chain is Phosphoglycerate kinase, found in Anaeromyxobacter sp. (strain K).